The primary structure comprises 238 residues: Oxidoreductase dmxR7 (238 aa).

It belongs to the avfA family.

Its pathway is secondary metabolite biosynthesis. Functionally, oxidoreductase; part of the gene cluster that mediates the biosynthesis of the dimeric xanthones cryptosporioptides. The pathway begins with the synthesis of atrochrysone thioester by the polyketide synthase dmx-nrPKS. The atrochrysone carboxyl ACP thioesterase dmxR1 then breaks the thioester bond and releases the atrochrysone carboxylic acid from dmx-nrPKS. Atrochrysone carboxylic acid is decarboxylated by the decarboxylase dmxR15, and oxidized by the anthrone oxygenase dmxR16 to yield emodin. Emodin is then reduced to emodin hydroquinone by the oxidoreductase dmxR7. A-ring reduction by the short chain dehydrogenase dmxR18, dehydration by the scytalone dehydratase-like protein dmxR17 and probable spontaneous re-oxidation, results in overall deoxygenation to chrysophanol. Baeyer-Villiger oxidation by the Baeyer-Villiger monooxygenase (BVMO) dmxR6 then yields monodictylactone in equilibrium with monodictyphenone. In the case of the cryptosporioptides biosynthesis, monodictylactone is reduced at C-12 to an alcohol (by the short chain dehydrogenases dmxR12 or dmxR8) and hydroxylated at C-5 by dmxR9, yielding the electron-rich aromatic which could eliminate H(2)O to form the ortho-quinonemethide, followed by tautomerisation to paraquinone and complete the formal reduction to produce the 10-methylgroup. Conjugate addition of C-4a-OH to the resulting paraquinone by the monooxygenase dmxR10 then gives cyclohexadienone, which is then reduced at C-5 by the short chain dehydrogenase dmxR3 to give the dihydroxanthone. The 6,7-epoxide in the cryptosporioptides could be introduced by the cytochrome P450 monooxygenase dmxL3. The highly reducing PKS dmxL2 manufactures butyrate, which is further carboxylated by dmxL1 to form ethylmalonate. It is not yet clear whether the carboxylation occurs while the butyrate is attached to the ACP of dmxL2, but this unusual fungal metabolite could then be esterified to O-5 by the O-acetyltransferase dmxR13. Finally, dimerization performed by dmxR5 gives the observed dimers cryptosporioptides A, B and C as the final products of the pathway. The chain is Oxidoreductase dmxR7 from Cryptosporiopsis sp. (strain 8999).